The chain runs to 114 residues: Iron-sulfur cluster insertion protein ErpA (114 aa).

Iron-sulfur cluster is bound by residues Cys42, Cys106, and Cys108.

It belongs to the HesB/IscA family. As to quaternary structure, homodimer. It depends on iron-sulfur cluster as a cofactor.

Its function is as follows. Required for insertion of 4Fe-4S clusters for at least IspG. The chain is Iron-sulfur cluster insertion protein ErpA from Haemophilus influenzae (strain PittEE).